Consider the following 452-residue polypeptide: FAD-linked oxidoreductase DDB_G0289697 (452 aa).

Residues V44–V212 enclose the FAD-binding PCMH-type domain. H81 carries the post-translational modification Pros-8alpha-FAD histidine.

The protein belongs to the oxygen-dependent FAD-linked oxidoreductase family. FAD serves as cofactor.

This Dictyostelium discoideum (Social amoeba) protein is FAD-linked oxidoreductase DDB_G0289697.